The following is a 112-amino-acid chain: HTH-type transcriptional regulator YodB (112 aa).

In terms of domain architecture, HTH hxlR-type spans 6–105 (CPKMESAFSL…WADQFCEPGD (100 aa)).

In terms of biological role, negatively regulates yodC and azoR1 which may contribute to the degradation of aromatic compounds. Probably positively regulates the catechol-specific transcription of mhqNOP, mhqED, and mhqA. The polypeptide is HTH-type transcriptional regulator YodB (yodB) (Bacillus subtilis (strain 168)).